The primary structure comprises 28 residues: Chassatide C11 (28 aa).

Intrachain disulfides connect cysteine 3/cysteine 19, cysteine 7/cysteine 21, and cysteine 12/cysteine 26. Methionine 16 bears the Methionine sulfoxide; in form chassatide chaC11A mark.

The protein belongs to the cyclotide family. Bracelet subfamily. As to expression, expressed in fruit, pedicel and stem but not in leaf and root (at protein level).

Its function is as follows. Chassatide C11: Probably participates in a plant defense mechanism. Active against E.coli ATCC 25922 (MIC=8.5 uM) but not against S.aureus ATCC 12600 or S.epidermidis ATCC 14990. Has cytotoxic and hemolytic activity. In terms of biological role, chassatide C11A: Probably participates in a plant defense mechanism. Has no activity against bacteria up to a concentration of 80 uM. Has no cytotoxic and no hemolytic activity. The polypeptide is Chassatide C11 (Chassalia chartacea (Chassalia curviflora)).